The sequence spans 600 residues: ATP-dependent lipid A-core flippase (600 aa).

A run of 4 helical transmembrane segments spans residues 27-47 (ISLF…QPML), 83-103 (LLII…NYFL), 174-194 (LLFM…LIAV), and 267-287 (PLLQ…VLYL). The ABC transmembrane type-1 domain maps to 31–322 (LISIVGFLIF…LSEVSSTIQK (292 aa)). Residues 354–590 (LDVRNLSFTY…NGYYARLNAM (237 aa)) form the ABC transporter domain. 388-395 (GRSGSGKS) is an ATP binding site.

Belongs to the ABC transporter superfamily. Lipid exporter (TC 3.A.1.106) family. As to quaternary structure, homodimer.

Its subcellular location is the cell inner membrane. The catalysed reaction is ATP + H2O + lipid A-core oligosaccharideSide 1 = ADP + phosphate + lipid A-core oligosaccharideSide 2.. In terms of biological role, involved in lipopolysaccharide (LPS) biosynthesis. Translocates lipid A-core from the inner to the outer leaflet of the inner membrane. Transmembrane domains (TMD) form a pore in the inner membrane and the ATP-binding domain (NBD) is responsible for energy generation. The chain is ATP-dependent lipid A-core flippase from Pseudomonas fluorescens (strain Pf0-1).